We begin with the raw amino-acid sequence, 269 residues long: Monofunctional glycosyltransferase (269 aa).

A helical membrane pass occupies residues 46 to 66 (ILLTILIIIALFIGIMYFLST).

It belongs to the glycosyltransferase 51 family.

The protein localises to the cell membrane. The catalysed reaction is [GlcNAc-(1-&gt;4)-Mur2Ac(oyl-L-Ala-gamma-D-Glu-L-Lys-D-Ala-D-Ala)](n)-di-trans,octa-cis-undecaprenyl diphosphate + beta-D-GlcNAc-(1-&gt;4)-Mur2Ac(oyl-L-Ala-gamma-D-Glu-L-Lys-D-Ala-D-Ala)-di-trans,octa-cis-undecaprenyl diphosphate = [GlcNAc-(1-&gt;4)-Mur2Ac(oyl-L-Ala-gamma-D-Glu-L-Lys-D-Ala-D-Ala)](n+1)-di-trans,octa-cis-undecaprenyl diphosphate + di-trans,octa-cis-undecaprenyl diphosphate + H(+). It participates in cell wall biogenesis; peptidoglycan biosynthesis. Peptidoglycan polymerase that catalyzes glycan chain elongation using lipid-linked disaccharide-pentapeptide as the substrate. This is Monofunctional glycosyltransferase from Staphylococcus aureus (strain JH1).